Consider the following 42-residue polypeptide: Omega-theraphotoxin-Asp3a (42 aa).

3 cysteine pairs are disulfide-bonded: C1/C16, C8/C21, and C15/C30.

The protein belongs to the neurotoxin 14 (magi-1) family. 08 (Ltx-4) subfamily. Expressed by the venom gland.

It localises to the secreted. Functionally, inhibits voltage-gated calcium channels (Cav) in rat cerebellar granule cells. This is Omega-theraphotoxin-Asp3a from Aphonopelma sp. (American tarantula).